A 1171-amino-acid chain; its full sequence is ATP-dependent helicase/deoxyribonuclease subunit B (1171 aa).

Residues 1 to 390 (MSLRFVIGRA…HPLVECIRSA (390 aa)) form the UvrD-like helicase ATP-binding domain. An ATP-binding site is contributed by 8-15 (GRAGSGKS). The UvrD-like helicase C-terminal domain occupies 281–587 (MEQPRFHSPA…QFANIPPSLD (307 aa)). [4Fe-4S] cluster-binding residues include Cys805, Cys1129, Cys1132, and Cys1138.

Belongs to the helicase family. AddB/RexB type 1 subfamily. In terms of assembly, heterodimer of AddA and AddB. It depends on Mg(2+) as a cofactor. [4Fe-4S] cluster is required as a cofactor.

The heterodimer acts as both an ATP-dependent DNA helicase and an ATP-dependent, dual-direction single-stranded exonuclease. Recognizes the chi site generating a DNA molecule suitable for the initiation of homologous recombination. The AddB subunit has 5' -&gt; 3' nuclease activity but not helicase activity. This chain is ATP-dependent helicase/deoxyribonuclease subunit B, found in Bacillus cereus (strain B4264).